A 304-amino-acid chain; its full sequence is Malate dehydrogenase (304 aa).

Residues 8–14 (GAAGTVG) and D34 contribute to the NAD(+) site. Positions 83 and 89 each coordinate substrate. NAD(+) is bound by residues N96 and 119-121 (TSN). 2 residues coordinate substrate: N121 and R152. H176 functions as the Proton acceptor in the catalytic mechanism.

It belongs to the LDH/MDH superfamily.

The catalysed reaction is (S)-malate + NAD(+) = oxaloacetate + NADH + H(+). In terms of biological role, catalyzes the reversible oxidation of malate to oxaloacetate. The polypeptide is Malate dehydrogenase (mdh) (Natronomonas pharaonis (strain ATCC 35678 / DSM 2160 / CIP 103997 / JCM 8858 / NBRC 14720 / NCIMB 2260 / Gabara) (Halobacterium pharaonis)).